The chain runs to 233 residues: Lysoplasmalogenase TMEM86B (233 aa).

The Cytoplasmic segment spans residues 1–30 (MPCCDPYPWIGLNVGRLSSFPLLKYPQVRR). Residues 31–47 (WLAPFIVACSLYFLLWI) traverse the membrane as a helical segment. At 48–53 (PEDQPS) the chain is on the extracellular side. Residues 54–75 (WVSALVKCQPILCLVLFLWAVA) form a helical membrane-spanning segment. The Cytoplasmic portion of the chain corresponds to 76-81 (PGGSYT). The chain crosses the membrane as a helical span at residues 82–100 (WLLQGALTCSAVGDACLIW). The Extracellular segment spans residues 101-106 (PEAFFY). A helical transmembrane segment spans residues 107–124 (GMAVFSVAHLLYLWAFGL). Topologically, residues 125–130 (SPLQPG) are cytoplasmic. The helical transmembrane segment at 131-147 (LLLCTTLASLTYYSFLL) threads the bilayer. Residues 148 to 153 (LHLEPN) are Extracellular-facing. A helical membrane pass occupies residues 154–170 (MVLPVAAYGLILNTMLW). Over 171–178 (RGLVLGRS) the chain is Cytoplasmic. The chain crosses the membrane as a helical span at residues 179-195 (AGWGAVLFIFSDGVLAW). Topologically, residues 196-206 (DTFVYTLPFAR) are extracellular. Residues 207 to 225 (LVTMSTYYAAQLLLTLSAL) traverse the membrane as a helical segment. Residues 226 to 233 (RSPGLKTH) lie on the Cytoplasmic side of the membrane.

Belongs to the TMEM86 family. As to quaternary structure, homodimer.

Its subcellular location is the endoplasmic reticulum membrane. It localises to the cytoplasm. It carries out the reaction a 1-O-(1Z-alkenyl)-sn-glycero-3-phosphocholine + H2O = a 2,3-saturated aldehyde + sn-glycerol 3-phosphocholine. The enzyme catalyses a 1-O-(1Z-alkenyl)-sn-glycero-3-phosphoethanolamine + H2O = a 2,3-saturated aldehyde + sn-glycero-3-phosphoethanolamine. Its activity is regulated as follows. Competitively inhibited by lysophosphatidic acid. Functionally, catalyzes the hydrolysis of the vinyl ether bond of choline or ethanolamine lysoplasmalogens, forming fatty aldehyde and glycerophosphocholine or glycerophosphoethanolamine, respectively and is specific for the sn-2-deacylated (lyso) form of plasmalogen. In Rattus norvegicus (Rat), this protein is Lysoplasmalogenase TMEM86B (Tmem86b).